We begin with the raw amino-acid sequence, 341 residues long: Endoglucanase 1 (341 aa).

An N-terminal signal peptide occupies residues 1–16 (MKTATLLAALSVLAGA). The propeptide occupies 17 to 30 (LAAPLAGDSALHRR). Glu166 (proton donor) is an active-site residue. Glu275 acts as the Nucleophile in catalysis.

The protein belongs to the glycosyl hydrolase 5 (cellulase A) family.

The enzyme catalyses Endohydrolysis of (1-&gt;4)-beta-D-glucosidic linkages in cellulose, lichenin and cereal beta-D-glucans.. Its function is as follows. Has endoglucanase activity on carboxymethyl-cellulose (CMC). The polypeptide is Endoglucanase 1 (CMC1) (Saitozyma flava (Cryptococcus flavus)).